The sequence spans 290 residues: Probable branched-chain-amino-acid aminotransferase (290 aa).

Residue lysine 155 is modified to N6-(pyridoxal phosphate)lysine.

It belongs to the class-IV pyridoxal-phosphate-dependent aminotransferase family. The cofactor is pyridoxal 5'-phosphate.

The enzyme catalyses L-leucine + 2-oxoglutarate = 4-methyl-2-oxopentanoate + L-glutamate. It catalyses the reaction L-isoleucine + 2-oxoglutarate = (S)-3-methyl-2-oxopentanoate + L-glutamate. It carries out the reaction L-valine + 2-oxoglutarate = 3-methyl-2-oxobutanoate + L-glutamate. Its pathway is amino-acid biosynthesis; L-isoleucine biosynthesis; L-isoleucine from 2-oxobutanoate: step 4/4. It participates in amino-acid biosynthesis; L-leucine biosynthesis; L-leucine from 3-methyl-2-oxobutanoate: step 4/4. It functions in the pathway amino-acid biosynthesis; L-valine biosynthesis; L-valine from pyruvate: step 4/4. Its function is as follows. Acts on leucine, isoleucine and valine. This chain is Probable branched-chain-amino-acid aminotransferase (ilvE), found in Rickettsia felis (strain ATCC VR-1525 / URRWXCal2) (Rickettsia azadi).